The chain runs to 517 residues: Probable bifunctional methylthioribulose-1-phosphate dehydratase/enolase-phosphatase E1 1 (517 aa).

Residues 1–240 (MAAAALNGLK…AIKLYQLGLD (240 aa)) form a methylthioribulose-1-phosphate dehydratase region. Cys112 contacts substrate. The Zn(2+) site is built by His130 and His132. The Proton donor/acceptor; for methylthioribulose-1-phosphate dehydratase activity role is filled by Glu155. A Zn(2+)-binding site is contributed by His205. Residues 278-517 (IVLDIEGTTT…FKTITSFSDI (240 aa)) are enolase-phosphatase E1. Residues Asp281 and Glu283 each coordinate Mg(2+). Residues 416-417 (SS) and Lys450 each bind substrate. Residue Asp476 coordinates Mg(2+).

The protein in the N-terminal section; belongs to the aldolase class II family. MtnB subfamily. It in the C-terminal section; belongs to the HAD-like hydrolase superfamily. MasA/MtnC family. The cofactor is Zn(2+). Mg(2+) serves as cofactor.

The enzyme catalyses 5-(methylsulfanyl)-D-ribulose 1-phosphate = 5-methylsulfanyl-2,3-dioxopentyl phosphate + H2O. It carries out the reaction 5-methylsulfanyl-2,3-dioxopentyl phosphate + H2O = 1,2-dihydroxy-5-(methylsulfanyl)pent-1-en-3-one + phosphate. The protein operates within amino-acid biosynthesis; L-methionine biosynthesis via salvage pathway; L-methionine from S-methyl-5-thio-alpha-D-ribose 1-phosphate: step 2/6. Its pathway is amino-acid biosynthesis; L-methionine biosynthesis via salvage pathway; L-methionine from S-methyl-5-thio-alpha-D-ribose 1-phosphate: step 3/6. It functions in the pathway amino-acid biosynthesis; L-methionine biosynthesis via salvage pathway; L-methionine from S-methyl-5-thio-alpha-D-ribose 1-phosphate: step 4/6. This Vitis vinifera (Grape) protein is Probable bifunctional methylthioribulose-1-phosphate dehydratase/enolase-phosphatase E1 1.